A 534-amino-acid chain; its full sequence is Kelch repeat and BTB domain-containing protein 4 (534 aa).

The segment at 1-25 (MKGGNADSWQREKLASMESPEEPGA) is disordered. Positions 61 to 128 (ADVTISVEGR…IYHGTVKLRA (68 aa)) constitute a BTB domain. The 93-residue stretch at 163-255 (CLQVMWLADR…SLKEIGENVH (93 aa)) folds into the BACK domain. 5 Kelch repeats span residues 255 to 301 (HIYL…KHGG), 302 to 344 (DLYV…SVPG), 347 to 394 (AIYS…NLNG), 396 to 446 (IYLL…VHKD), and 448 to 497 (VFIV…VFRD).

Component of the BCR(KBTBD4) E3 ubiquitin ligase complex, at least composed of CUL3, KBTBD4 and RBX1.

Substrate-specific adapter of a BCR (BTB-CUL3-RBX1) E3 ubiquitin ligase complex which targets CoREST corepressor complex components RCOR1, KDM1A/LSD1 and HDAC2 for proteasomal degradation. RCOR1 is likely to be the primary target while degradation of KDM1A and HDAC2 is likely due to their association with RCOR1. Also targets RCOR3, MIER2 and MIER3 for proteasomal degradation as well as associated proteins ZNF217 and RREB1. Degradation is dependent on the presence of an ELM2 domain in the target proteins. In Homo sapiens (Human), this protein is Kelch repeat and BTB domain-containing protein 4 (KBTBD4).